The chain runs to 2382 residues: Nonribosomal peptide synthetase chyA (2382 aa).

The segment at 204–607 (QKCATQPESI…LGRKDHQVKI (404 aa)) is adenylation 1. The 77-residue stretch at 745–821 (TPTTQNQRIL…DMASVLVKDH (77 aa)) folds into the Carrier 1 domain. The residue at position 782 (Ser-782) is an O-(pantetheine 4'-phosphoryl)serine. Positions 857-1269 (EDVYPCTHMQ…LVPPEDMATL (413 aa)) are condensation 1. The adenylation 2 stretch occupies residues 1294 to 1687 (GQPDTLAIHS…VGRKDDQVKL (394 aa)). In terms of domain architecture, Carrier 2 spans 1833 to 1909 (VPVSIHGRKV…GLSLKCATEN (77 aa)). An O-(pantetheine 4'-phosphoryl)serine modification is found at Ser-1870. The interval 1967-2373 (MTLHNFYSRY…FSDVIESLAS (407 aa)) is condensation 2.

The protein belongs to the NRP synthetase family.

It functions in the pathway pigment biosynthesis. Functionally, nonribosomal peptide synthetase; part of the gene cluster that mediates the biosynthesis of the yellow pigment chrysogine. the NRPS chyA mediates the condensation of anthranilic acid and alanine into the intermediate 2-(2-aminopropanamido)benzoic acid. The remainder of the pathway is highly branched yielding at least 13 chrysogine-related compounds. The malonyl transferase chyE converts 2-(2-aminopropanamido)benzoic acid and 2-(2-aminopropanamido)benzamidine into 2-(2-(2-carboxyacetamido)propanamido)benzoic acid and 3-((1-((2-carbamoylphenyl)amino)-1-oxopropan-2-yl)amino)-3-oxopropanoic acid, respectively. ChyD is an amidase, being responsible for the amidation of the carboxylic acid moiety of 2-(2-aminopropanamido)benzoic acid, 2-(2-(2-carboxyacetamido)propanamido)benzoic acid and 2-(2-((4-amino-1-carboxy-4-oxobutyl)amino)propanamido)benzoic acid. ChyC is involved in the same reactions as ChyD, but plays a more minor role in the amidation reactions compared to chyD. The oxidoreductases chyH and chyM are involved in oxidation reactions that form N-pyruvoylanthranilamide from 2-(2-aminopropanamido)benzamidine and (1-((2-carbamoylphenyl)amino)-1-oxopropan-2-yl)glutamine, respectively. N-pyruvoylanthranilamide is further converted via two further branches in the pathway, yielding chrysogine and additional chrysogine-related coumpounds. Chrysogine is likely formed by a spontaneous ring closure from N-pyruvoylanthranilamide. This chain is Nonribosomal peptide synthetase chyA, found in Penicillium rubens (strain ATCC 28089 / DSM 1075 / NRRL 1951 / Wisconsin 54-1255) (Penicillium chrysogenum).